Here is a 1923-residue protein sequence, read N- to C-terminus: Callose synthase 5 (1923 aa).

Residues 1 to 10 show a composition bias toward polar residues; that stretch reads MAQSSTSHDS. Residues 1–22 form a disordered region; the sequence is MAQSSTSHDSGPQGLMRRPSRS. The Cytoplasmic portion of the chain corresponds to 1–481; that stretch reads MAQSSTSHDS…ETRTFWHIYH (481 aa). Residues 482–502 form a helical membrane-spanning segment; the sequence is SFDRLWTFYLLALQAMIILAF. Residues 503–521 lie on the Extracellular side of the membrane; it reads ERVELREILRKDVLYALSS. Residues 522–542 traverse the membrane as a helical segment; sequence IFITAAFLRFLQSVLDVILNF. Over 543-559 the chain is Cytoplasmic; it reads PGFHRWKFTDVLRNILK. Residues 560 to 580 traverse the membrane as a helical segment; it reads IVVSLAWCVVLPLCYAQSVSF. Topologically, residues 581–601 are extracellular; the sequence is APGKLKQWLSFLPQVKGVPPL. Residues 602 to 622 form a helical membrane-spanning segment; the sequence is YIMAVALYLLPNVLAAIMFIF. At 623–658 the chain is on the cytoplasmic side; that stretch reads PMLRRWIENSDWHIFRLLLWWSQPRIYVGRGMHESQ. The chain crosses the membrane as a helical span at residues 659–679; the sequence is IALIKYTIFWLLLFCCKFAFS. The Extracellular segment spans residues 680–719; that stretch reads YFLQVKLLVKPTNAIMSIRHVKYKWHEFFPNAEHNYGAVV. The chain crosses the membrane as a helical span at residues 720-740; sequence SLWLPVILVYFMDTQIWYAIF. The Cytoplasmic segment spans residues 741–1486; the sequence is STICGGVIGA…FDFFRMMSCY (746 aa). A helical membrane pass occupies residues 1487 to 1507; that stretch reads FTTVGFYISSMIVVLTVYAFL. Residues 1508 to 1535 lie on the Extracellular side of the membrane; it reads YGRLYLSLSGVEEAIVKFAAAKGDSSLK. A helical transmembrane segment spans residues 1536 to 1556; that stretch reads AAMASQSVVQLGLLMTLPMVM. The Cytoplasmic portion of the chain corresponds to 1557 to 1566; that stretch reads EIGLERGFRT. A helical membrane pass occupies residues 1567 to 1587; sequence ALSDLIIMQLQLAPVFFTFSL. Residues 1588–1630 are Extracellular-facing; it reads GTKVHYYGRTILHGGSKYRATGRGFVVKHEKFAENYRMYSRSH. Residues 1631–1651 form a helical membrane-spanning segment; the sequence is FVKGMELMVLLICYRIYGKAA. Residues 1652–1657 are Cytoplasmic-facing; it reads EDSVGY. A helical transmembrane segment spans residues 1658 to 1678; it reads ALVMGSTWFLVGSWLFAPFFF. Residues 1679-1732 lie on the Extracellular side of the membrane; sequence NPSGFEWQKIVDDWDDWNKWISSRGGIGVPANKSWESWWEEEQEHLLHSGFFGK. Asn-1710 is a glycosylation site (N-linked (GlcNAc...) asparagine). Residues 1733-1755 form a helical membrane-spanning segment; it reads FWEIFLSLRYFIYQYGIVYQLNL. Residues 1756–1766 are Cytoplasmic-facing; the sequence is TKESRMGKQHS. Residues 1767-1787 form a helical membrane-spanning segment; sequence IIVYGLSWLVIVAVMIVLKIV. Residues 1788 to 1803 lie on the Extracellular side of the membrane; the sequence is SMGRKKFSADFQLMFR. The chain crosses the membrane as a helical span at residues 1804 to 1824; sequence LLKLFLFIGSVVIVGMLFHFL. Lys-1825 is a topological domain (cytoplasmic). The helical transmembrane segment at 1826-1846 threads the bilayer; that stretch reads LTVGDIMQSLLAFLPTGWALL. The Extracellular portion of the chain corresponds to 1847-1873; that stretch reads QISQVARPLMKTVGMWGSVKALARGYE. A helical membrane pass occupies residues 1874-1894; sequence YIMGVVIFMPVTVLAWFPFVS. Residues 1895-1923 lie on the Cytoplasmic side of the membrane; sequence EFQTRLLFNQAFSRGLQIQRILAGGKKQK.

The protein belongs to the glycosyltransferase 48 family.

It is found in the cell membrane. The enzyme catalyses [(1-&gt;3)-beta-D-glucosyl](n) + UDP-alpha-D-glucose = [(1-&gt;3)-beta-D-glucosyl](n+1) + UDP + H(+). Functionally, required for the formation of the callose wall separating the tetraspores (interstitial wall) and surrounding the pollen mother cells (peripheral wall). Required for exine formation on pollen wall. May be involved in callose synthesis during pollen tube growth. During plant growth and development, callose is found as a transitory component of the cell plate in dividing cells, is a major component of pollen mother cell walls and pollen tubes, and is found as a structural component of plasmodesmatal canals. In Arabidopsis thaliana (Mouse-ear cress), this protein is Callose synthase 5 (CALS5).